Reading from the N-terminus, the 410-residue chain is MSYQELDPIVWSAIQQESARQNRTIELIASENFTSQAVRAAQGSVLTNKYAEGYPYKRYYGGTEYVDVVEQVAIDRLKELFGAEYANVQPHSGSQANAAAYMAFLKPGDKILGMSLDAGGHLTHGAKVSFSGKVYESHTYGLNSETETLDYEAIAKQAREVKPQMIVAGASAYSRIIEFDKFRAIADEVGAYLMVDMAHIAGLVAAGLHPNPVGIADVVTSTTHKTLRGPRGGVILSQEKYAKQLNSAIFPGSQGGPLEHIIAGKAIAFGEALQPKFKDYAQQVIKNAQAMAKVFNDTEDIRVVAGGTDNHLFNLDLTKTALNGKQTQELLDTVSITTNKEALPNEQLSPFVTSGIRIGTAAITTRGFDEDDATNVAELIVTAIHHYDDEKVLKQVKREAEALAMTHLFE.

Residues Leu-116 and Gly-120–Leu-122 each bind (6S)-5,6,7,8-tetrahydrofolate. N6-(pyridoxal phosphate)lysine is present on Lys-225. (6S)-5,6,7,8-tetrahydrofolate is bound at residue Ser-349–Phe-351.

The protein belongs to the SHMT family. Homodimer. The cofactor is pyridoxal 5'-phosphate.

The protein resides in the cytoplasm. It carries out the reaction (6R)-5,10-methylene-5,6,7,8-tetrahydrofolate + glycine + H2O = (6S)-5,6,7,8-tetrahydrofolate + L-serine. It participates in one-carbon metabolism; tetrahydrofolate interconversion. It functions in the pathway amino-acid biosynthesis; glycine biosynthesis; glycine from L-serine: step 1/1. In terms of biological role, catalyzes the reversible interconversion of serine and glycine with tetrahydrofolate (THF) serving as the one-carbon carrier. This reaction serves as the major source of one-carbon groups required for the biosynthesis of purines, thymidylate, methionine, and other important biomolecules. Also exhibits THF-independent aldolase activity toward beta-hydroxyamino acids, producing glycine and aldehydes, via a retro-aldol mechanism. In Leuconostoc mesenteroides subsp. mesenteroides (strain ATCC 8293 / DSM 20343 / BCRC 11652 / CCM 1803 / JCM 6124 / NCDO 523 / NBRC 100496 / NCIMB 8023 / NCTC 12954 / NRRL B-1118 / 37Y), this protein is Serine hydroxymethyltransferase.